The chain runs to 478 residues: Succinyl-CoA:acetate/propanoyl-CoA:succinate CoA transferase (478 aa).

Residues 1 to 30 constitute a mitochondrion transit peptide; sequence MYQLAFLRCRYASPIVREARRAFHASRKCQ. Residue 256–260 coordinates CoA; it reads GIGAI. The active-site 5-glutamyl coenzyme A thioester intermediate is the Glu279. Residues Ile354, Gly377, and Lys404 each contribute to the CoA site.

Belongs to the acetyl-CoA hydrolase/transferase family.

It localises to the mitochondrion. It catalyses the reaction succinyl-CoA + acetate = succinate + acetyl-CoA. It carries out the reaction propanoyl-CoA + succinate = propanoate + succinyl-CoA. Its function is as follows. Transferase involved in anaerobic fumarate-respiration in the mitochondria. Catalyzes the transfer of the CoA moiety of acetyl-CoA or propionyl-CoA to succinate, thereby forming acetate and propionate, respectively. Acetate and propionate are the two major metabolic end products in the anaerobic mitochondrial metabolism of F.hepatica. Also displays CoA transferase activities from acetyl-CoA to propionate, acetate and butyrate. This chain is Succinyl-CoA:acetate/propanoyl-CoA:succinate CoA transferase, found in Fasciola hepatica (Liver fluke).